Consider the following 1357-residue polypeptide: DNA-directed RNA polymerase subunit beta (1357 aa).

The protein belongs to the RNA polymerase beta chain family. As to quaternary structure, the RNAP catalytic core consists of 2 alpha, 1 beta, 1 beta' and 1 omega subunit. When a sigma factor is associated with the core the holoenzyme is formed, which can initiate transcription.

It catalyses the reaction RNA(n) + a ribonucleoside 5'-triphosphate = RNA(n+1) + diphosphate. In terms of biological role, DNA-dependent RNA polymerase catalyzes the transcription of DNA into RNA using the four ribonucleoside triphosphates as substrates. The polypeptide is DNA-directed RNA polymerase subunit beta (Pseudomonas syringae pv. tomato (strain ATCC BAA-871 / DC3000)).